A 586-amino-acid polypeptide reads, in one-letter code: Aspartate--tRNA(Asp/Asn) ligase (586 aa).

Glutamate 172 serves as a coordination point for L-aspartate. Positions glutamine 196–lysine 199 are aspartate. Residue arginine 218 participates in L-aspartate binding. Residues arginine 218–glutamate 220 and glutamine 227 each bind ATP. Histidine 446 lines the L-aspartate pocket. Residue glutamate 480 participates in ATP binding. Arginine 487 contributes to the L-aspartate binding site. Residue glycine 532 to arginine 535 participates in ATP binding.

Belongs to the class-II aminoacyl-tRNA synthetase family. Type 1 subfamily. Homodimer.

It is found in the cytoplasm. It carries out the reaction tRNA(Asx) + L-aspartate + ATP = L-aspartyl-tRNA(Asx) + AMP + diphosphate. Its function is as follows. Aspartyl-tRNA synthetase with relaxed tRNA specificity since it is able to aspartylate not only its cognate tRNA(Asp) but also tRNA(Asn). Reaction proceeds in two steps: L-aspartate is first activated by ATP to form Asp-AMP and then transferred to the acceptor end of tRNA(Asp/Asn). The protein is Aspartate--tRNA(Asp/Asn) ligase of Borreliella afzelii (strain PKo) (Borrelia afzelii).